A 166-amino-acid polypeptide reads, in one-letter code: UPF0260 protein GbCGDNIH1_2046 (166 aa).

The disordered stretch occupies residues 147–166 (RFPRPRRPRQEPAGKTADES). Positions 154–166 (PRQEPAGKTADES) are enriched in basic and acidic residues.

Belongs to the UPF0260 family.

This is UPF0260 protein GbCGDNIH1_2046 from Granulibacter bethesdensis (strain ATCC BAA-1260 / CGDNIH1).